Consider the following 345-residue polypeptide: Phosphate import ATP-binding protein PstB 2 (345 aa).

Residues 1 to 57 form a disordered region; the sequence is MSDTPQSEPRRSDDRSGADDATAAAAGSTDAAAAAVSSKTGGIAGPPGGPGEVDGDE. Residues 8-18 are compositionally biased toward basic and acidic residues; sequence EPRRSDDRSGA. Positions 19–35 are enriched in low complexity; the sequence is DDATAAAAGSTDAAAAA. The span at 42–52 shows a compositional bias: gly residues; it reads GIAGPPGGPGE. The region spanning 86 to 340 is the ABC transporter domain; that stretch reads VSVSDLDTYY…PQSQRVEDYV (255 aa). 118–125 contributes to the ATP binding site; it reads GPSGCGKS.

Belongs to the ABC transporter superfamily. Phosphate importer (TC 3.A.1.7) family. The complex is composed of two ATP-binding proteins (PstB), two transmembrane proteins (PstC and PstA) and a solute-binding protein (PstS).

It is found in the cell membrane. It carries out the reaction phosphate(out) + ATP + H2O = ADP + 2 phosphate(in) + H(+). Its function is as follows. Part of the ABC transporter complex PstSACB involved in phosphate import. Responsible for energy coupling to the transport system. In Halobacterium salinarum (strain ATCC 700922 / JCM 11081 / NRC-1) (Halobacterium halobium), this protein is Phosphate import ATP-binding protein PstB 2.